A 231-amino-acid polypeptide reads, in one-letter code: Large ribosomal subunit protein uL1 (231 aa).

It belongs to the universal ribosomal protein uL1 family. In terms of assembly, part of the 50S ribosomal subunit.

Its function is as follows. Binds directly to 23S rRNA. The L1 stalk is quite mobile in the ribosome, and is involved in E site tRNA release. In terms of biological role, protein L1 is also a translational repressor protein, it controls the translation of the L11 operon by binding to its mRNA. This Buchnera aphidicola subsp. Acyrthosiphon pisum (strain 5A) protein is Large ribosomal subunit protein uL1.